We begin with the raw amino-acid sequence, 247 residues long: tRNA uridine(34) hydroxylase (247 aa).

Positions 124 to 218 constitute a Rhodanese domain; sequence TKQNVIVIDT…YLEDTQNKNN (95 aa). Cys-178 acts as the Cysteine persulfide intermediate in catalysis.

This sequence belongs to the TrhO family.

The enzyme catalyses uridine(34) in tRNA + AH2 + O2 = 5-hydroxyuridine(34) in tRNA + A + H2O. Functionally, catalyzes oxygen-dependent 5-hydroxyuridine (ho5U) modification at position 34 in tRNAs. This Rickettsia akari (strain Hartford) protein is tRNA uridine(34) hydroxylase.